The sequence spans 428 residues: G2/mitotic-specific cyclin-B (428 aa).

It belongs to the cyclin family. Cyclin AB subfamily. Interacts with the CDC2 protein kinase to form a serine/threonine kinase holoenzyme complex also known as maturation promoting factor (MPF). The cyclin subunit imparts substrate specificity to the complex.

Essential for the control of the cell cycle at the G2/M (mitosis) transition. This chain is G2/mitotic-specific cyclin-B, found in Spisula solidissima (Atlantic surf-clam).